A 311-amino-acid chain; its full sequence is N-acetyl-gamma-glutamyl-phosphate reductase (311 aa).

Cysteine 117 is an active-site residue.

The protein belongs to the NAGSA dehydrogenase family. Type 2 subfamily.

The protein resides in the cytoplasm. It carries out the reaction N-acetyl-L-glutamate 5-semialdehyde + phosphate + NADP(+) = N-acetyl-L-glutamyl 5-phosphate + NADPH + H(+). It participates in amino-acid biosynthesis; L-arginine biosynthesis; N(2)-acetyl-L-ornithine from L-glutamate: step 3/4. Functionally, catalyzes the NADPH-dependent reduction of N-acetyl-5-glutamyl phosphate to yield N-acetyl-L-glutamate 5-semialdehyde. This Brucella anthropi (strain ATCC 49188 / DSM 6882 / CCUG 24695 / JCM 21032 / LMG 3331 / NBRC 15819 / NCTC 12168 / Alc 37) (Ochrobactrum anthropi) protein is N-acetyl-gamma-glutamyl-phosphate reductase.